The primary structure comprises 579 residues: Alpha-glucosidase (579 aa).

Aspartate 212 functions as the Nucleophile in the catalytic mechanism. The active-site Proton donor is the glutamate 269.

Belongs to the glycosyl hydrolase 13 family.

It carries out the reaction Hydrolysis of terminal, non-reducing (1-&gt;4)-linked alpha-D-glucose residues with release of alpha-D-glucose.. This is Alpha-glucosidase (mal1) from Schizosaccharomyces pombe (strain 972 / ATCC 24843) (Fission yeast).